The sequence spans 1217 residues: ATP-dependent helicase/nuclease subunit A (1217 aa).

The 466-residue stretch at 10 to 475 (VIWTDAQWQS…IDLSQNFRSR (466 aa)) folds into the UvrD-like helicase ATP-binding domain. ATP is bound at residue 31 to 38 (AAAGSGKT). The 311-residue stretch at 476–786 (KEVLSTTNYI…RMMTIHSSKG (311 aa)) folds into the UvrD-like helicase C-terminal domain.

Belongs to the helicase family. AddA subfamily. In terms of assembly, heterodimer of AddA and AddB/RexB. Mg(2+) serves as cofactor.

The enzyme catalyses Couples ATP hydrolysis with the unwinding of duplex DNA by translocating in the 3'-5' direction.. It carries out the reaction ATP + H2O = ADP + phosphate + H(+). Functionally, the heterodimer acts as both an ATP-dependent DNA helicase and an ATP-dependent, dual-direction single-stranded exonuclease. Recognizes the chi site generating a DNA molecule suitable for the initiation of homologous recombination. The AddA nuclease domain is required for chi fragment generation; this subunit has the helicase and 3' -&gt; 5' nuclease activities. In Staphylococcus aureus (strain MRSA252), this protein is ATP-dependent helicase/nuclease subunit A.